The sequence spans 201 residues: MLYMDDECQKLLAEKEAIIRELQEKVKELEAKLKSYEIREVYKGIIPDDVLEEFVKLPPEQMIIEIGRYLREKGSTGQVEAKKTVNDVRQEIASVEEEVSKAEKEIEKTISTITGAAKTKVGVDLTFTQKYDYEGSDVAFLAEDIMNAIGVKEGEYVSVKKNGTVNLRVLPYSKEGFIVVPTWVREKLGVKVNDFVEVVRR.

2 coiled-coil regions span residues tyrosine 3 to lysine 43 and threonine 76 to lysine 120.

This is an uncharacterized protein from Archaeoglobus fulgidus (strain ATCC 49558 / DSM 4304 / JCM 9628 / NBRC 100126 / VC-16).